The primary structure comprises 327 residues: Phenylalanine--tRNA ligase alpha subunit (327 aa).

Glutamate 252 is a Mg(2+) binding site.

It belongs to the class-II aminoacyl-tRNA synthetase family. Phe-tRNA synthetase alpha subunit type 1 subfamily. As to quaternary structure, tetramer of two alpha and two beta subunits. Requires Mg(2+) as cofactor.

It is found in the cytoplasm. The enzyme catalyses tRNA(Phe) + L-phenylalanine + ATP = L-phenylalanyl-tRNA(Phe) + AMP + diphosphate + H(+). In Salmonella agona (strain SL483), this protein is Phenylalanine--tRNA ligase alpha subunit.